Consider the following 287-residue polypeptide: Large ribosomal subunit protein uL2 (287 aa).

The tract at residues 221 to 287 (RGSVMNPCDH…SKRSRGGRDS (67 aa)) is disordered. Residues 258-287 (KTRKKNKPSNKLVVRRRRRISKRSRGGRDS) are compositionally biased toward basic residues.

The protein belongs to the universal ribosomal protein uL2 family. Part of the 50S ribosomal subunit. Forms a bridge to the 30S subunit in the 70S ribosome.

Functionally, one of the primary rRNA binding proteins. Required for association of the 30S and 50S subunits to form the 70S ribosome, for tRNA binding and peptide bond formation. It has been suggested to have peptidyltransferase activity; this is somewhat controversial. Makes several contacts with the 16S rRNA in the 70S ribosome. The chain is Large ribosomal subunit protein uL2 from Prochlorococcus marinus (strain MIT 9312).